A 49-amino-acid polypeptide reads, in one-letter code: KGGYPVDSKGCKISCVINNEYCSRDCTSGYCYFLRWGLACWCDGVPPQR.

Cystine bridges form between Cys15–Cys31, Cys22–Cys40, and Cys26–Cys42.

The protein belongs to the long (4 C-C) scorpion toxin superfamily. Sodium channel inhibitor family. Beta subfamily. As to expression, expressed by the venom gland.

It is found in the secreted. Its function is as follows. Beta toxins bind voltage-independently at site-4 of sodium channels (Nav) and shift the voltage of activation toward more negative potentials thereby affecting sodium channel activation and promoting spontaneous and repetitive firing. This toxin acts on X.laevis Nav1.6/SCN8A and insect BgNav1 channels, and also displays a small but significant effect on X.laevis Nav1.4/SCN4A channels. In mice induces nociception (licking and lifting behaviors) during the first 15 minutes after injection, and increases the release of TNF-alpha in J774.1 cells. The chain is Beta-toxin Rc1 from Rhopalurus crassicauda (Scorpion).